The sequence spans 281 residues: 4-diphosphocytidyl-2-C-methyl-D-erythritol kinase (281 aa).

K15 is a catalytic residue. 98-108 contributes to the ATP binding site; that stretch reads PTGAGLGGGSS. D140 is an active-site residue.

Belongs to the GHMP kinase family. IspE subfamily.

It carries out the reaction 4-CDP-2-C-methyl-D-erythritol + ATP = 4-CDP-2-C-methyl-D-erythritol 2-phosphate + ADP + H(+). The protein operates within isoprenoid biosynthesis; isopentenyl diphosphate biosynthesis via DXP pathway; isopentenyl diphosphate from 1-deoxy-D-xylulose 5-phosphate: step 3/6. In terms of biological role, catalyzes the phosphorylation of the position 2 hydroxy group of 4-diphosphocytidyl-2C-methyl-D-erythritol. This is 4-diphosphocytidyl-2-C-methyl-D-erythritol kinase from Neisseria meningitidis serogroup A / serotype 4A (strain DSM 15465 / Z2491).